The following is a 65-amino-acid chain: Alpha-like toxin Bom4 (65 aa).

The 63-residue stretch at 2–64 folds into the LCN-type CS-alpha/beta domain; sequence RDAYIAQPEN…VPIRIPGKCH (63 aa). Cystine bridges form between C12–C63, C16–C36, C22–C46, and C26–C48.

It belongs to the long (4 C-C) scorpion toxin superfamily. Sodium channel inhibitor family. Alpha subfamily. As to expression, expressed by the venom gland.

The protein resides in the secreted. Its function is as follows. Alpha toxins bind voltage-independently at site-3 of sodium channels (Nav) and inhibit the inactivation of the activated channels, thereby blocking neuronal transmission. This alpha-like toxin is highly toxic to mice and insects. This Buthus occitanus mardochei (Moroccan scorpion) protein is Alpha-like toxin Bom4.